The sequence spans 98 residues: Cystatin-A (98 aa).

N-acetylmethionine is present on Met1. The Secondary area of contact motif lies at 46–50 (QVVAG).

It belongs to the cystatin family. As to expression, expressed in the skin throughout the epidermis.

It is found in the cytoplasm. Functionally, this is an intracellular thiol proteinase inhibitor. Has an important role in desmosome-mediated cell-cell adhesion in the lower levels of the epidermis. The protein is Cystatin-A (CSTA) of Homo sapiens (Human).